A 262-amino-acid polypeptide reads, in one-letter code: Type III pantothenate kinase (262 aa).

6–13 (DVGNTNTV) contributes to the ATP binding site. Substrate contacts are provided by residues Tyr-101 and 108–111 (GADR). Asp-110 functions as the Proton acceptor in the catalytic mechanism. Asp-130 serves as a coordination point for K(+). Thr-133 is an ATP binding site. Residue Thr-186 coordinates substrate.

The protein belongs to the type III pantothenate kinase family. Homodimer. It depends on NH4(+) as a cofactor. Requires K(+) as cofactor.

Its subcellular location is the cytoplasm. The enzyme catalyses (R)-pantothenate + ATP = (R)-4'-phosphopantothenate + ADP + H(+). The protein operates within cofactor biosynthesis; coenzyme A biosynthesis; CoA from (R)-pantothenate: step 1/5. In terms of biological role, catalyzes the phosphorylation of pantothenate (Pan), the first step in CoA biosynthesis. This is Type III pantothenate kinase from Desulforapulum autotrophicum (strain ATCC 43914 / DSM 3382 / VKM B-1955 / HRM2) (Desulfobacterium autotrophicum).